Consider the following 402-residue polypeptide: Sulfate adenylyltransferase (402 aa).

It belongs to the sulfate adenylyltransferase family.

The catalysed reaction is sulfate + ATP + H(+) = adenosine 5'-phosphosulfate + diphosphate. Its pathway is sulfur metabolism; hydrogen sulfide biosynthesis; sulfite from sulfate: step 1/3. In Ruthia magnifica subsp. Calyptogena magnifica, this protein is Sulfate adenylyltransferase.